The chain runs to 134 residues: Small ribosomal subunit protein uS12 (134 aa).

At D89 the chain carries 3-methylthioaspartic acid. Residues 103–134 (DTAGVKDRKQGRSKYGAKRPKPGEAAATGKKK) are disordered. Positions 113–122 (GRSKYGAKRP) are enriched in basic residues.

Belongs to the universal ribosomal protein uS12 family. As to quaternary structure, part of the 30S ribosomal subunit. Contacts proteins S8 and S17. May interact with IF1 in the 30S initiation complex.

Its function is as follows. With S4 and S5 plays an important role in translational accuracy. Functionally, interacts with and stabilizes bases of the 16S rRNA that are involved in tRNA selection in the A site and with the mRNA backbone. Located at the interface of the 30S and 50S subunits, it traverses the body of the 30S subunit contacting proteins on the other side and probably holding the rRNA structure together. The combined cluster of proteins S8, S12 and S17 appears to hold together the shoulder and platform of the 30S subunit. This Thermosynechococcus vestitus (strain NIES-2133 / IAM M-273 / BP-1) protein is Small ribosomal subunit protein uS12.